A 386-amino-acid polypeptide reads, in one-letter code: Alpha-D-kanosaminyltransferase (386 aa).

Belongs to the glycosyltransferase group 1 family.

It catalyses the reaction 2'-deamino-2'-hydroxyneamine + UDP-alpha-D-kanosamine = kanamycin A + UDP + H(+). The enzyme catalyses neamine + UDP-alpha-D-kanosamine = kanamycin B + UDP + H(+). The catalysed reaction is paromamine + UDP-alpha-D-kanosamine = kanamycin C + UDP + H(+). It carries out the reaction 2'-deamino-2'-hydroxyparomamine + UDP-alpha-D-kanosamine = kanamycin X + UDP + H(+). It participates in antibiotic biosynthesis; kanamycin biosynthesis. Glycosyltransferase involved in the biosynthesis of kanamycins by catalyzing the transfer of the hexose kanosamine from UDP-alpha-D-kanosamine to disaccharide precursors. Can also use UDP-alpha-D-glucose as sugar donor with much lower efficiency. This Streptomyces kanamyceticus protein is Alpha-D-kanosaminyltransferase (kanE).